We begin with the raw amino-acid sequence, 222 residues long: Twisted gastrulation protein homolog 1 (222 aa).

The N-terminal stretch at 1 to 24 (MKSHYIVLALASLTFLLCLPVSQS) is a signal peptide. N-linked (GlcNAc...) asparagine glycosylation is found at Asn-80 and Asn-146.

It belongs to the twisted gastrulation protein family. As to quaternary structure, interacts with CHRD and/or BMP4. This interaction enhances CHRD/BMP4 complex formation. Interacts with BMP7. In terms of tissue distribution, expressed in lymph node, liver, kidney, and lung. Expression in the kidney was stronger in the medulla than in the cortex, particularly in the cells surrounding the medullary tubules. Expressed in growth plate cartilage of long bones, ribs, and digits and to a lesser extent also in the resting zone of the epiphysis, trabecular bone, and vertebral cartilage. Expression seems to be absent from other skeletal tissues including muscle, skin, and fibroblasts.

It is found in the secreted. May be involved in dorsoventral axis formation. Seems to antagonize BMP signaling by forming ternary complexes with CHRD and BMPs, thereby preventing BMPs from binding to their receptors. In addition to the anti-BMP function, also has pro-BMP activity, partly mediated by cleavage and degradation of CHRD, which releases BMPs from ternary complexes. May be an important modulator of BMP-regulated cartilage development and chondrocyte differentiation. May play a role in thymocyte development. This is Twisted gastrulation protein homolog 1 (Twsg1) from Mus musculus (Mouse).